Here is a 164-residue protein sequence, read N- to C-terminus: Protein-export protein SecB (164 aa).

Belongs to the SecB family. As to quaternary structure, homotetramer, a dimer of dimers. One homotetramer interacts with 1 SecA dimer.

The protein resides in the cytoplasm. In terms of biological role, one of the proteins required for the normal export of preproteins out of the cell cytoplasm. It is a molecular chaperone that binds to a subset of precursor proteins, maintaining them in a translocation-competent state. It also specifically binds to its receptor SecA. The sequence is that of Protein-export protein SecB from Stutzerimonas stutzeri (strain A1501) (Pseudomonas stutzeri).